The primary structure comprises 189 residues: Probable nicotinate-nucleotide adenylyltransferase (189 aa).

This sequence belongs to the NadD family.

The enzyme catalyses nicotinate beta-D-ribonucleotide + ATP + H(+) = deamido-NAD(+) + diphosphate. Its pathway is cofactor biosynthesis; NAD(+) biosynthesis; deamido-NAD(+) from nicotinate D-ribonucleotide: step 1/1. In terms of biological role, catalyzes the reversible adenylation of nicotinate mononucleotide (NaMN) to nicotinic acid adenine dinucleotide (NaAD). The chain is Probable nicotinate-nucleotide adenylyltransferase from Caulobacter sp. (strain K31).